The primary structure comprises 199 residues: Recombination protein RecR (199 aa).

The C4-type zinc finger occupies 58-73 (CQRCNNFSEEAVCQRC). One can recognise a Toprim domain in the interval 81–176 (ATLCVVEMPA…KVSRISRGVP (96 aa)).

The protein belongs to the RecR family.

In terms of biological role, may play a role in DNA repair. It seems to be involved in an RecBC-independent recombinational process of DNA repair. It may act with RecF and RecO. The polypeptide is Recombination protein RecR (Azoarcus sp. (strain BH72)).